The chain runs to 218 residues: RNA polymerase sigma-H factor (218 aa).

The Polymerase core binding motif lies at 62-75; that stretch reads DIVQEGMIGLYKSI. Residues 182–201 constitute a DNA-binding region (H-T-H motif); the sequence is YQEISDELNRHVKSIDNALQ.

The protein belongs to the sigma-70 factor family. As to quaternary structure, interacts transiently with the RNAP core.

Sigma factors are initiation factors that promote the attachment of RNA polymerase (RNAP) to specific initiation sites and are then released. This sigma factor is involved in the transition to post-exponential phase in the beginning of sporulation. It is also required for transcription of several stationary phase genes. Association with the RNAP core increases rapidly in early exponential phase, and reamins constant expression level after. The protein is RNA polymerase sigma-H factor (sigH) of Bacillus subtilis (strain 168).